We begin with the raw amino-acid sequence, 354 residues long: Sphingosine-1-phosphate phosphatase 2 (354 aa).

Helical transmembrane passes span 43–63, 76–96, 115–135, and 140–160; these read YLFR…FLPF, LVVI…ILKW, YGMP…LLIS, and YQYP…LVCL. The phosphatase sequence motif I stretch occupies residues 91-99; that stretch reads KDILKWPRP. A phosphatase sequence motif II region spans residues 118–121; that stretch reads PSTH. The active-site Proton donor is histidine 121. Positions 161–172 are phosphatase sequence motif III; it reads SRLYTGMHTVLD. Catalysis depends on histidine 168, which acts as the Nucleophile. 5 helical membrane-spanning segments follow: residues 173 to 193, 202 to 222, 235 to 255, 273 to 293, and 334 to 354; these read ILGG…AWTL, PLFP…YPVS, IVAA…FQLV, TDML…ILLV, and TSVG…LGLL.

It belongs to the type 2 lipid phosphate phosphatase family. Highly expressed in pancreatic islets. Expressed in lung, small interstince, colon, kideny and brain.

The protein localises to the endoplasmic reticulum membrane. It carries out the reaction sphinganine 1-phosphate + H2O = sphinganine + phosphate. It catalyses the reaction sphing-4-enine 1-phosphate + H2O = sphing-4-enine + phosphate. The catalysed reaction is (4R)-hydroxysphinganine 1-phosphate + H2O = (4R)-hydroxysphinganine + phosphate. Its function is as follows. Has specific phosphohydrolase activity towards sphingoid base 1-phosphates. Has high phosphohydrolase activity against dihydrosphingosine-1-phosphate and sphingosine-1-phosphate (S1P) in vitro. Sphingosine-1-phosphate phosphatase activity is needed for efficient recycling of sphingosine into the sphingolipid synthesis pathway. May play a role in attenuating intracellular sphingosine 1-phosphate (S1P) signaling. May play a role in pro-inflammatory signaling. Plays a role in the regulation of pancreatic islet beta-cell endoplasmic reticulum stress and proliferation. This Mus musculus (Mouse) protein is Sphingosine-1-phosphate phosphatase 2.